The sequence spans 413 residues: Tyrosine--tRNA ligase (413 aa).

Residues 60-69 (PTAPDIHIGH) carry the 'HIGH' region motif. Positions 244–248 (KMSKS) match the 'KMSKS' region motif. Residue Lys-247 participates in ATP binding. Positions 352–412 (LGIAQLLKQA…GKRRFARVTL (61 aa)) constitute an S4 RNA-binding domain.

It belongs to the class-I aminoacyl-tRNA synthetase family. TyrS type 2 subfamily. As to quaternary structure, homodimer.

The protein resides in the cytoplasm. The enzyme catalyses tRNA(Tyr) + L-tyrosine + ATP = L-tyrosyl-tRNA(Tyr) + AMP + diphosphate + H(+). Its function is as follows. Catalyzes the attachment of tyrosine to tRNA(Tyr) in a two-step reaction: tyrosine is first activated by ATP to form Tyr-AMP and then transferred to the acceptor end of tRNA(Tyr). This Cupriavidus pinatubonensis (strain JMP 134 / LMG 1197) (Cupriavidus necator (strain JMP 134)) protein is Tyrosine--tRNA ligase.